Consider the following 73-residue polypeptide: UPF0346 protein lp_1865 (73 aa).

The protein belongs to the UPF0346 family.

The sequence is that of UPF0346 protein lp_1865 from Lactiplantibacillus plantarum (strain ATCC BAA-793 / NCIMB 8826 / WCFS1) (Lactobacillus plantarum).